Here is a 546-residue protein sequence, read N- to C-terminus: MASASSGPAAAGFSSLDAGAPAGTAAASGIKRATVSEGPSASVMPVKKIGHRSVDSSGETTYKKTTSSALKGAIQLGITHTVGSLSTKPERDVLMQDFYVVESIFFPSEGSNLTPAHHYNDFRFKTYAPVAFRYFRELFGIRPDDYLYSLCSEPLIELSNSGASGSLFYVSSDDEFIIKTVQHKEAEFLQKLLPGYYMNLNQNPRTLLPKFYGLYCVQAGGKNIRIVVMNNLLPRSVKMHMKYDLKGSTYKRRASQKEREKTLPTFKDLDFLQDIPDGLFLDADMYSALCKTLQRDCLVLQSFKIMDYSLLMSIHNMDHAQREPTSNDTQYSADTRRPAPQKALYSTAMESIQGEARRGGTVETEDHMGGIPARNNKGERLLLYIGIIDILQSYRFVKKLEHSWKALVHDGDTVSVHRPGFYAERFQRFMCNTVFKKIPLKPSPTKKFRSGPSFSRRSGPSGNSCTSQLMASGEHRAQVTTKAEVEPDVHLGRPDVLPQTPPLEEISEGSPVPGPSFSPVVGQPLQILNLSSTLEKLDVAESEFTH.

A PIPK domain is found at 66–434 (TSSALKGAIQ…RFQRFMCNTV (369 aa)). Lys-88 is covalently cross-linked (Glycyl lysine isopeptide (Lys-Gly) (interchain with G-Cter in ubiquitin)). 2 disordered regions span residues 442-475 (PSPT…SGEH) and 491-518 (LGRP…PSFS). Composition is skewed to low complexity over residues 450–462 (SGPS…GPSG) and 509–518 (GSPVPGPSFS).

In terms of assembly, interacts with RAC1. Interacts with TUT1. Forms a complex with CDH1/E-cadherin, CTNNB1/beta-catenin and CTNND1 at the plasma membrane upon calcium stimulation. Found in a ternary complex with IRS1 and DGKZ in the absence of insulin stimulation. Interacts with DGKZ. Interacts with PIP4K2C; the interaction inhibits PIP5K1A kinase activity. Highest expression in brain. Also detected in skeletal muscle, testis, brain and lung.

It localises to the cell membrane. Its subcellular location is the cytoplasm. The protein resides in the nucleus. The protein localises to the nucleus speckle. It is found in the cell projection. It localises to the ruffle. Its subcellular location is the lamellipodium. It catalyses the reaction a 1,2-diacyl-sn-glycero-3-phospho-(1D-myo-inositol 4-phosphate) + ATP = a 1,2-diacyl-sn-glycero-3-phospho-(1D-myo-inositol-4,5-bisphosphate) + ADP + H(+). The catalysed reaction is 1-octadecanoyl-2-(5Z,8Z,11Z,14Z)-eicosatetraenoyl-sn-glycero-3-phospho-1D-myo-inositol 4-phosphate + ATP = 1-octadecanoyl-2-(5Z,8Z,11Z,14Z)-eicosatetraenoyl-sn-glycero-3-phospho-1D-myo-inositol 4,5-bisphosphate + ADP + H(+). It carries out the reaction 1,2-dihexadecanoyl-sn-glycero-3-phospho-(1D-myo-inositol-4-phosphate) + ATP = 1,2-dihexadecanoyl-sn-glycero-3-phospho-(1D-myo-inositol-4,5-bisphosphate) + ADP + H(+). The enzyme catalyses 1-octadecanoyl-2-(9Z)-octadecenoyl-sn-glycero-3-phospho-1D-myo-inositol 4-phosphate + ATP = 1-octadecanoyl-2-(9Z)-octadecenoyl-sn-glycero-3-phospho-1D-myo-inositol 4,5-bisphosphate + ADP + H(+). It catalyses the reaction 1-octadecanoyl-2-(9Z)-octadecenoyl-sn-glycero-3-phospho-1D-myo-inositol + ATP = 1-octadecanoyl-2-(9Z)-octadecenoyl-sn-glycero-3-phospho-1D-myo-inositol 5-phosphate + ADP + H(+). The catalysed reaction is 1-octadecanoyl-2-(9Z,12Z)-octadecadienoyl-sn-glycero-3-phospho-1D-myo-inositol + ATP = 1-octadecanoyl-2-(9Z,12Z)-octadecadienoyl-sn-glycero-3-phospho-1D-myo-inositol 5-phosphate + ADP + H(+). It carries out the reaction 1-octadecanoyl-2-(5Z,8Z,11Z,14Z-eicosatetraenoyl)-sn-glycero-3-phospho-(1D-myo-inositol) + ATP = 1-octadecanoyl-2-(5Z,8Z,11Z,14Z)-eicosatetraenoyl-sn-glycero-3-phospho-1D-myo-inositol 5-phosphate + ADP + H(+). The enzyme catalyses 1,2-di-(9Z,12Z)-octadecadienoyl-sn-glycero-3-phospho-1D-myo-inositol + ATP = 1,2-di(9Z,12Z)-octadecadienoyl-sn-glycero-3-phospho-1D-myo-inositol 5-phosphate + ADP + H(+). Its activity is regulated as follows. Activated by phosphatidic acid. In terms of biological role, catalyzes the phosphorylation of phosphatidylinositol 4-phosphate (PtdIns(4)P/PI4P) to form phosphatidylinositol 4,5-bisphosphate (PtdIns(4,5)P2/PIP2), a lipid second messenger that regulates several cellular processes such as signal transduction, vesicle trafficking, actin cytoskeleton dynamics, cell adhesion, and cell motility. PtdIns(4,5)P2 can directly act as a second messenger or can be utilized as a precursor to generate other second messengers: inositol 1,4,5-trisphosphate (IP3), diacylglycerol (DAG) or phosphatidylinositol-3,4,5-trisphosphate (PtdIns(3,4,5)P3/PIP3). PIP5K1A-mediated phosphorylation of PtdIns(4)P is the predominant pathway for PtdIns(4,5)P2 synthesis. Can also use phosphatidylinositol (PtdIns) as substrate in vitro. Together with PIP5K1C, is required for phagocytosis, both enzymes regulating different types of actin remodeling at sequential steps. Promotes particle ingestion by activating the WAS GTPase-binding protein that induces Arp2/3 dependent actin polymerization at the nascent phagocytic cup. Together with PIP5K1B, is required, after stimulation by G-protein coupled receptors, for the synthesis of IP3 that will induce stable platelet adhesion. Recruited to the plasma membrane by the E-cadherin/beta-catenin complex where it provides the substrate PtdIns(4,5)P2 for the production of PtdIns(3,4,5)P3, IP3 and DAG, that will mobilize internal calcium and drive keratinocyte differentiation. Positively regulates insulin-induced translocation of SLC2A4 to the cell membrane in adipocytes. Together with PIP5K1C has a role during embryogenesis. Independently of its catalytic activity, is required for membrane ruffling formation, actin organization and focal adhesion formation during directional cell migration by controlling integrin-induced translocation of the small GTPase RAC1 to the plasma membrane. Also functions in the nucleus where it acts as an activator of TUT1 adenylyltransferase activity in nuclear speckles, thereby regulating mRNA polyadenylation of a select set of mRNAs. In Mus musculus (Mouse), this protein is Phosphatidylinositol 4-phosphate 5-kinase type-1 alpha.